We begin with the raw amino-acid sequence, 147 residues long: uncharacterized protein (147 aa).

In terms of domain architecture, HTH marR-type spans 1–137 (MRDNTIGSLI…LYELMTKVHK (137 aa)). The H-T-H motif DNA-binding region spans 53 to 76 (QMELAEKVTVTQGGISRMLTRLEK).

This is an uncharacterized protein from Bacillus cereus (strain ATCC 10987 / NRS 248).